The chain runs to 373 residues: Tomoregulin-1 (373 aa).

An N-terminal signal peptide occupies residues 1 to 36 (MGAQAPLRLPAAPPLAVCGYTSVLLLFAFCLPGSGA). Residues 37–323 (SNQPAGGGGD…VPSRQKLTHV (287 aa)) are Extracellular-facing. An N-linked (GlcNAc...) asparagine glycan is attached at N56. One can recognise a Kazal-like 1 domain in the interval 91–138 (ACQFQCHTNYIPVCGSNGDTYQNECFLRRAACKHQKDITVVARGPCYS). Disulfide bonds link C92/C122, C96/C115, and C104/C136. N140 carries N-linked (GlcNAc...) asparagine glycosylation. Positions 140 to 162 (NGSGSGEGEEEGSGAGAHRKHSK) are disordered. The Kazal-like 2 domain maps to 182–230 (VCNIDCSGYSFNPVCASDGSSYNNPCFVREASCIRQEQIDIRHLGHCTD). Disulfide bonds link C183/C214, C187/C207, C196/C228, C268/C281, C276/C292, and C294/C303. One can recognise an EGF-like domain in the interval 264–304 (SHMPCPENLNGYCIHGKCEFIYSTQKASCRCESGYTGQHCE). A helical membrane pass occupies residues 324–344 (LIAAIIGAVQIAIIVAIVMCI). Topologically, residues 345–373 (TRKCPKNNRGRRQKQNLGHFTSETSSRMV) are cytoplasmic. Residues 352 to 373 (NRGRRQKQNLGHFTSETSSRMV) are disordered. The segment covering 359 to 373 (QNLGHFTSETSSRMV) has biased composition (polar residues).

This sequence belongs to the tomoregulin family. As to quaternary structure, may interact with ST14.

Its subcellular location is the cell membrane. Neuron-specific restriction factor that prevents herpes simplex virus 1 (HHV-1) infection in the brain by blocking viral entry. Also able to restrict herpes simplex virus 2 (HHV-2) infection, although to a lesser extent. Acts by preventing the association between the viral glycoprotein D (gD) and its cell surface receptor NECTIN1, thereby inhibiting fusion of the virus and the cell membrane. Also able to prevent the association between the viral glycoprotein B (gB) and MYH9/NMMHC-IIA and MYH10/NMMHC-IIB receptors. The polypeptide is Tomoregulin-1 (Tmeff1) (Rattus norvegicus (Rat)).